A 371-amino-acid polypeptide reads, in one-letter code: Cytokine receptor-like factor 2 (371 aa).

Residues 1–22 (MGRLVLLWGAAVFLLGGWMALG) form the signal peptide. The Extracellular segment spans residues 23-231 (QGGAAEGVQI…PTPPKPKLSK (209 aa)). N-linked (GlcNAc...) asparagine glycosylation is found at asparagine 47 and asparagine 55. Cysteine 71 and cysteine 84 are oxidised to a cystine. 2 N-linked (GlcNAc...) asparagine glycosylation sites follow: asparagine 101 and asparagine 169. In terms of domain architecture, Fibronectin type-III spans 118-211 (KPSSPKHVRF…DWSEVTCWQR (94 aa)). Cysteine 180 and cysteine 218 are disulfide-bonded. Positions 200-204 (PSDWS) match the WSXWS motif motif. Residues 232–252 (FILISSLAILLMVSLLLLSLW) form a helical membrane-spanning segment. At 253–371 (KLWRVKKFLI…VMNDRSYVAL (119 aa)) the chain is on the cytoplasmic side. A Box 1 motif motif is present at residues 261–269 (LIPSVPDPK). The span at 322–336 (ESPRMLDPQTEEKEA) shows a compositional bias: basic and acidic residues. The segment at 322–347 (ESPRMLDPQTEEKEASGGSLQLPHQP) is disordered.

The protein belongs to the type I cytokine receptor family. Type 5 subfamily. Heterodimer of CRLF2 and IL7R. Expressed in heart, skeletal muscle, kidney and adult and fetal liver. Primarily expressed in dendrites and monocytes. Weakly expressed in T-cells.

It localises to the cell membrane. The protein resides in the secreted. In terms of biological role, receptor for thymic stromal lymphopoietin (TSLP). Forms a functional complex with TSLP and IL7R which is capable of stimulating cell proliferation through activation of STAT3 and STAT5. Also activates JAK2. Implicated in the development of the hematopoietic system. The chain is Cytokine receptor-like factor 2 (CRLF2) from Homo sapiens (Human).